The following is a 183-amino-acid chain: MGVRVHVVAASALLYFILLSGTRCEENCGNPEHCLTTDWVHLWYIWLLVVIGALLLLCGLTSLCFRCCCLSRQQNGEDGGPPPCEVTVIAFDHDSTLQSTITSLQSVFGPAARRILAVAHSHSSLGQLPSSLDTLPGYEEALHMSRFTVAMCGQKAPDLPPVPEEKQLPPTEKESTRIVDSWN.

Positions 1 to 24 (MGVRVHVVAASALLYFILLSGTRC) are cleaved as a signal peptide. A helical transmembrane segment spans residues 40-60 (VHLWYIWLLVVIGALLLLCGL). A disordered region spans residues 158–183 (DLPPVPEEKQLPPTEKESTRIVDSWN). Over residues 163–177 (PEEKQLPPTEKESTR) the composition is skewed to basic and acidic residues.

The protein resides in the membrane. This is Transmembrane protein 52B (TMEM52B) from Homo sapiens (Human).